We begin with the raw amino-acid sequence, 257 residues long: Insulin-induced gene 1 protein (257 aa).

Residues 1-64 (MPRLHDHVWS…ARPGSWHHDL (64 aa)) lie on the Cytoplasmic side of the membrane. A disordered region spans residues 32–54 (CPQGSGAPEPAPRSPRAGTAGCG). The helical transmembrane segment at 65–87 (VQRSLVLFSFGVVLALVLNLLQI) threads the bilayer. The Extracellular portion of the chain corresponds to 88 to 106 (QRNVTLFPDEVIATIFSSA). A helical membrane pass occupies residues 107-124 (WWVPPCCGTAAAVVGLLY). Over 125 to 139 (PCIDSHLGEPHKFKR) the chain is Cytoplasmic. Residues lysine 136 and lysine 138 each participate in a glycyl lysine isopeptide (Lys-Gly) (interchain with G-Cter in ubiquitin) cross-link. The chain crosses the membrane as a helical span at residues 140-162 (EWASVMRCIAVFVGINHASAKLD). Over 163-165 (FAN) the chain is Extracellular. The chain crosses the membrane as a helical span at residues 166 to 184 (NVQLSLTLAALSLGLWWTF). The Cytoplasmic portion of the chain corresponds to 185–189 (DRSRS). At serine 187 the chain carries Phosphoserine. The helical transmembrane segment at 190–211 (GLGLGITIAFLATLITQFLVYN) threads the bilayer. At 212 to 225 (GVYQYTSPDFLYIR) the chain is on the extracellular side. A helical membrane pass occupies residues 226–243 (SWLPCIFFSGGVTVGNIG). The Cytoplasmic segment spans residues 244–257 (RQLAMGVPEKPHSD). The KxHxx motif lies at 251 to 257 (PEKPHSD).

This sequence belongs to the INSIG family. In terms of assembly, interacts with SCAP; interaction is direct and only takes place in the presence of sterols; it prevents interaction between SCAP and the coat protein complex II (COPII). Associates with the SCAP-SREBP complex (composed of SCAP and SREBF1/SREBP1 or SREBF2/SREBP2); association is mediated via its interaction with SCAP and only takes place in the presence of sterols. Interaction with SCAP is mutually exclusive with PAQR3. Interacts with HMGCR (via its SSD); the interaction, accelerated by sterols, leads to the recruitment of HMGCR to AMFR/gp78 for its ubiquitination by the sterol-mediated ERAD pathway. Interacts with AMFR/gp78 (via its membrane domain); the interaction recruits HMCR at the ER membrane for its ubiquitination and degradation by the sterol-mediated ERAD pathway. Interacts with SOAT2/ACAT2; leading to promote recruitment of AMFR/gp78 and subsequent ubiquitination of SOAT2/ACAT2. Interacts with RNF139. Interacts with RNF145. In terms of processing, phosphorylation at Ser-187 by PCK1 reduces binding to oxysterol, disrupting the interaction between INSIG1 and SCAP, thereby promoting nuclear translocation of SREBP proteins (SREBF1/SREBP1 or SREBF2/SREBP2) and subsequent transcription of downstream lipogenesis-related genes. Post-translationally, ubiquitinated by AMFR/gp78 in response to sterol deprivation, leading to its degradation: when the SCAP-SREBP complex becomes dissociated from INSIG1, INSIG1 is then ubiquitinated and degraded in proteasomes. Although ubiquitination is required for rapid INSIG1 degradation, it is not required for release of the SCAP-SREBP complex. Ubiquitinated by RNF139.

It localises to the endoplasmic reticulum membrane. Oxysterol-binding protein that mediates feedback control of cholesterol synthesis by controlling both endoplasmic reticulum to Golgi transport of SCAP and degradation of HMGCR. Acts as a negative regulator of cholesterol biosynthesis by mediating the retention of the SCAP-SREBP complex in the endoplasmic reticulum, thereby blocking the processing of sterol regulatory element-binding proteins (SREBPs) SREBF1/SREBP1 and SREBF2/SREBP2. Binds oxysterol, including 25-hydroxycholesterol, regulating interaction with SCAP and retention of the SCAP-SREBP complex in the endoplasmic reticulum. In presence of oxysterol, interacts with SCAP, retaining the SCAP-SREBP complex in the endoplasmic reticulum, thereby preventing SCAP from escorting SREBF1/SREBP1 and SREBF2/SREBP2 to the Golgi. Sterol deprivation or phosphorylation by PCK1 reduce oxysterol-binding, disrupting the interaction between INSIG1 and SCAP, thereby promoting Golgi transport of the SCAP-SREBP complex, followed by processing and nuclear translocation of SREBF1/SREBP1 and SREBF2/SREBP2. Also regulates cholesterol synthesis by regulating degradation of HMGCR: initiates the sterol-mediated ubiquitin-mediated endoplasmic reticulum-associated degradation (ERAD) of HMGCR via recruitment of the reductase to the ubiquitin ligases AMFR/gp78 and/or RNF139. Also regulates degradation of SOAT2/ACAT2 when the lipid levels are low: initiates the ubiquitin-mediated degradation of SOAT2/ACAT2 via recruitment of the ubiquitin ligases AMFR/gp78. This Cricetulus griseus (Chinese hamster) protein is Insulin-induced gene 1 protein.